The primary structure comprises 207 residues: MITPAGNCIYLASRSARRRDLLKQIGIRHNILLMREALSRPADVDETPLPEESPADYVYRITHTKSEAGWLRLKQRGLPLLPVLAADTTVVLDGRILGKPQDIGHAEEMLHALSGQEHQVYTAVGLTFQGQTRLRLSTTTVRFRDISPREIQAYIASGEPHDKAGAYAIQGKAAAFIINIDGSYSGVVGLPLFETSQLLEETGISVF.

Catalysis depends on Asp87, which acts as the Proton acceptor.

It belongs to the Maf family. YhdE subfamily. It depends on a divalent metal cation as a cofactor.

Its subcellular location is the cytoplasm. The catalysed reaction is dTTP + H2O = dTMP + diphosphate + H(+). It carries out the reaction UTP + H2O = UMP + diphosphate + H(+). In terms of biological role, nucleoside triphosphate pyrophosphatase that hydrolyzes dTTP and UTP. May have a dual role in cell division arrest and in preventing the incorporation of modified nucleotides into cellular nucleic acids. This is dTTP/UTP pyrophosphatase from Nitrosomonas europaea (strain ATCC 19718 / CIP 103999 / KCTC 2705 / NBRC 14298).